A 266-amino-acid chain; its full sequence is Hemin import ATP-binding protein HmuV (266 aa).

The ABC transporter domain maps to 2–242 (IEAVDICVQR…QNLRDVYSCS (241 aa)). 34–41 (GPNGSGKS) is a binding site for ATP.

Belongs to the ABC transporter superfamily. Heme (hemin) importer (TC 3.A.1.14.5) family. As to quaternary structure, the complex is composed of two ATP-binding proteins (HmuV), two transmembrane proteins (HmuU) and a solute-binding protein (HmuT).

It is found in the cell inner membrane. In terms of biological role, part of the ABC transporter complex HmuTUV involved in hemin import. Responsible for energy coupling to the transport system. The sequence is that of Hemin import ATP-binding protein HmuV from Bartonella henselae (strain ATCC 49882 / DSM 28221 / CCUG 30454 / Houston 1) (Rochalimaea henselae).